Reading from the N-terminus, the 127-residue chain is uncharacterized protein (127 aa).

An N-terminal signal peptide occupies residues 1-26 (MKAIYALLAVVALALVAVSLFSQSDS).

This is an uncharacterized protein from Archaeoglobus fulgidus (strain ATCC 49558 / DSM 4304 / JCM 9628 / NBRC 100126 / VC-16).